A 293-amino-acid chain; its full sequence is Pantothenate synthetase (293 aa).

Residue 30-37 (MGYLHKGH) coordinates ATP. His-37 serves as the catalytic Proton donor. Gln-61 contributes to the (R)-pantoate binding site. Gln-61 is a beta-alanine binding site. Residue 147 to 150 (GEKD) participates in ATP binding. Gln-153 provides a ligand contact to (R)-pantoate. Residues Val-176 and 184 to 187 (CSSR) each bind ATP.

It belongs to the pantothenate synthetase family. As to quaternary structure, homodimer.

It is found in the cytoplasm. It catalyses the reaction (R)-pantoate + beta-alanine + ATP = (R)-pantothenate + AMP + diphosphate + H(+). It functions in the pathway cofactor biosynthesis; (R)-pantothenate biosynthesis; (R)-pantothenate from (R)-pantoate and beta-alanine: step 1/1. Functionally, catalyzes the condensation of pantoate with beta-alanine in an ATP-dependent reaction via a pantoyl-adenylate intermediate. The polypeptide is Pantothenate synthetase (Brucella abortus (strain S19)).